The chain runs to 208 residues: Thioesterase 1/protease 1/lysophospholipase L1 (208 aa).

A signal peptide spans 1–26 (MMNFNNVFRWHLPFLFLVLLTFRAAA). Serine 36 serves as the catalytic Nucleophile. Glycine 70 and asparagine 99 together coordinate substrate. Catalysis depends on residues aspartate 180 and histidine 183.

The protein belongs to the 'GDSL' lipolytic enzyme family. In terms of assembly, monomer or homotetramer.

It localises to the periplasm. The enzyme catalyses a fatty acyl-CoA + H2O = a fatty acid + CoA + H(+). The catalysed reaction is hexadecanoyl-CoA + H2O = hexadecanoate + CoA + H(+). It carries out the reaction (9Z)-hexadecenoyl-CoA + H2O = (9Z)-hexadecenoate + CoA + H(+). It catalyses the reaction octadecanoyl-CoA + H2O = octadecanoate + CoA + H(+). The enzyme catalyses (9Z)-octadecenoyl-CoA + H2O = (9Z)-octadecenoate + CoA + H(+). The catalysed reaction is (9Z)-octadecenoyl-[ACP] + H2O = (9Z)-octadecenoate + holo-[ACP] + H(+). It carries out the reaction (11Z)-octadecenoyl-CoA + H2O = (11Z)-octadecenoate + CoA + H(+). It catalyses the reaction tetradecanoyl-CoA + H2O = tetradecanoate + CoA + H(+). The enzyme catalyses (5Z,8Z,11Z,14Z)-eicosatetraenoyl-CoA + H2O = (5Z,8Z,11Z,14Z)-eicosatetraenoate + CoA + H(+). The catalysed reaction is dodecanoyl-CoA + H2O = dodecanoate + CoA + H(+). It carries out the reaction decanoyl-CoA + H2O = decanoate + CoA + H(+). It catalyses the reaction hexanoyl-CoA + H2O = hexanoate + CoA + H(+). The enzyme catalyses a 1-acyl-sn-glycero-3-phosphocholine + H2O = sn-glycerol 3-phosphocholine + a fatty acid + H(+). The catalysed reaction is a phenyl acetate + H2O = a phenol + acetate + H(+). It carries out the reaction a butanoate ester + H2O = an aliphatic alcohol + butanoate + H(+). It catalyses the reaction a hexanoate ester + H2O = an aliphatic alcohol + hexanoate + H(+). The enzyme catalyses an octanoate ester + H2O = an aliphatic alcohol + octanoate + H(+). Its function is as follows. TesA is a multifunctional esterase that can act as a thioesterase, arylesterase, lysophospholipase and protease. This Escherichia coli O6:H1 (strain CFT073 / ATCC 700928 / UPEC) protein is Thioesterase 1/protease 1/lysophospholipase L1 (tesA).